Here is a 151-residue protein sequence, read N- to C-terminus: Flavodoxin YqcA (151 aa).

One can recognise a Flavodoxin-like domain in the interval 4–145; that stretch reads IGIFVGTVYG…ISCPWVEAWA (142 aa). FMN contacts are provided by residues 10 to 15 and 99 to 101; these read TVYGNA and NFC.

It belongs to the flavodoxin family. MioC subfamily. In terms of assembly, monomer. Requires FMN as cofactor.

In terms of biological role, probable electron transporter. This is Flavodoxin YqcA from Pectobacterium carotovorum subsp. carotovorum (Erwinia carotovora subsp. carotovora).